Consider the following 31-residue polypeptide: Photosystem I reaction center subunit XII (31 aa).

Residues 7-26 traverse the membrane as a helical segment; it reads QVYVALVIALLPAVLAFRLS.

This sequence belongs to the PsaM family.

The protein resides in the cellular thylakoid membrane. This chain is Photosystem I reaction center subunit XII, found in Thermosynechococcus vestitus (strain NIES-2133 / IAM M-273 / BP-1).